The following is a 275-amino-acid chain: Vitamin B12-binding protein (275 aa).

An N-terminal signal peptide occupies residues 1 to 19 (MMNKLCFALPLIFSDASFA). The Fe/B12 periplasmic-binding domain occupies 25 to 272 (RIISLAPHST…EVCEHFETVR (248 aa)). A disulfide bridge links cysteine 185 with cysteine 265.

The protein belongs to the BtuF family. The complex is composed of two ATP-binding proteins (BtuD), two transmembrane proteins (BtuC) and a solute-binding protein (BtuF).

It localises to the periplasm. Part of the ABC transporter complex BtuCDF involved in vitamin B12 import. Binds vitamin B12 and delivers it to the periplasmic surface of BtuC. The protein is Vitamin B12-binding protein of Vibrio campbellii (strain ATCC BAA-1116).